The following is a 243-amino-acid chain: UPF0246 protein SpyM51747 (243 aa).

Belongs to the UPF0246 family.

This chain is UPF0246 protein SpyM51747, found in Streptococcus pyogenes serotype M5 (strain Manfredo).